The chain runs to 300 residues: UDP-N-acetylenolpyruvoylglucosamine reductase (300 aa).

The 165-residue stretch at 30-194 (KVGGAADFFV…VGATFRLDPA (165 aa)) folds into the FAD-binding PCMH-type domain. Arg-174 is an active-site residue. Catalysis depends on Ser-223, which acts as the Proton donor. Glu-293 is an active-site residue.

The protein belongs to the MurB family. FAD serves as cofactor.

The protein localises to the cytoplasm. It catalyses the reaction UDP-N-acetyl-alpha-D-muramate + NADP(+) = UDP-N-acetyl-3-O-(1-carboxyvinyl)-alpha-D-glucosamine + NADPH + H(+). It participates in cell wall biogenesis; peptidoglycan biosynthesis. Its function is as follows. Cell wall formation. The chain is UDP-N-acetylenolpyruvoylglucosamine reductase from Geobacter metallireducens (strain ATCC 53774 / DSM 7210 / GS-15).